We begin with the raw amino-acid sequence, 595 residues long: MESNHKSGDGLSGTQKEAALRALVQRTGYSLVQENGQRKYGGPPPGWDSTPPERGCEIFIGKLPRDLFEDELIPLCEKIGKIYEMRLMMDFNGNNRGYAFVTFSNKQEAKNAIKQLNNYEIRTGRLLGVCASVDNCRLFVGGIPKTKKREEILSEMKKVTEGVVDVIVYPSAADKTKNRGFAFVEYESHRAAAMARRRLLPGRIQLWGHPIAVDWAEPEVEVDEDTMSSVKILYVRNLMLSTSEEMIEKEFNSIKPGAVERVKKIRDYAFVHFSNREDAVEAMKALNGKVLDGSPIEVTLAKPVDKDSYVRYTRGTGGRNTMLQGEYTYPLSHVYDPTTTYLGAPVFYTPQAYAAIPSLHFPATKGHLSNRALIRTPSVREIYMNVPVGAAGVRGLGGRGYLAYTGLGRGYHVKGDKREDKLYDLLPGMELTPMNTVSLKPQGIKLAPQILEEICQKNNWGQPVYQLHSAIGQDQRQLFLYKVTIPALASQNPAIHPFIPPKLSAYVDEAKRYAAEHTLQTLGIPTEGGDAGTTAPTATSATVFPGYAVPSATAPVSTAQLKQAVTLGQDLAAYTTYEVYPTFALTTRGDAYGTF.

RRM domains lie at C56–D134, C136–P218, and K231–P303. A required for nuclear localization region spans residues H360–R409.

Part of the apolipoprotein B mRNA editing complex with APOBEC1. Interacts with TNPO2; TNPO2 may be responsible for transport of A1CF into the nucleus. Interacts with SYNCRIP. Interacts with CELF2/CUGBP2. Interacts with RBM47. As to expression, expressed primarily in liver, small intestine and kidney.

The protein localises to the nucleus. It is found in the endoplasmic reticulum. The protein resides in the cytoplasm. In terms of biological role, essential component of the apolipoprotein B mRNA editing enzyme complex which is responsible for the postranscriptional editing of a CAA codon for Gln to a UAA codon for stop in APOB mRNA. Binds to APOB mRNA and is probably responsible for docking the catalytic subunit, APOBEC1, to the mRNA to allow it to deaminate its target cytosine. The complex also seems to protect the edited APOB mRNA from nonsense-mediated decay. The polypeptide is APOBEC1 complementation factor (A1cf) (Mus musculus (Mouse)).